A 178-amino-acid polypeptide reads, in one-letter code: ATP-dependent protease subunit HslV (178 aa).

Thr7 is a catalytic residue. Na(+) is bound by residues Gly162, Cys165, and Thr168.

Belongs to the peptidase T1B family. HslV subfamily. As to quaternary structure, a double ring-shaped homohexamer of HslV is capped on each side by a ring-shaped HslU homohexamer. The assembly of the HslU/HslV complex is dependent on binding of ATP.

The protein resides in the cytoplasm. The catalysed reaction is ATP-dependent cleavage of peptide bonds with broad specificity.. Its activity is regulated as follows. Allosterically activated by HslU binding. In terms of biological role, protease subunit of a proteasome-like degradation complex believed to be a general protein degrading machinery. This Janthinobacterium sp. (strain Marseille) (Minibacterium massiliensis) protein is ATP-dependent protease subunit HslV.